Consider the following 245-residue polypeptide: tRNA1(Val) (adenine(37)-N6)-methyltransferase (245 aa).

This sequence belongs to the methyltransferase superfamily. tRNA (adenine-N(6)-)-methyltransferase family.

The protein localises to the cytoplasm. The enzyme catalyses adenosine(37) in tRNA1(Val) + S-adenosyl-L-methionine = N(6)-methyladenosine(37) in tRNA1(Val) + S-adenosyl-L-homocysteine + H(+). Its function is as follows. Specifically methylates the adenine in position 37 of tRNA(1)(Val) (anticodon cmo5UAC). This chain is tRNA1(Val) (adenine(37)-N6)-methyltransferase, found in Salmonella typhi.